Reading from the N-terminus, the 1169-residue chain is Transcription-repair-coupling factor (1169 aa).

Positions 634 to 795 (DMERERPMDR…MLGVRDLSVI (162 aa)) constitute a Helicase ATP-binding domain. 647–654 (GDVGYGKT) serves as a coordination point for ATP. Residues 748 to 751 (DEEQ) carry the DEEQ box motif. One can recognise a Helicase C-terminal domain in the interval 809 to 970 (VLEQNSNFIK…GFKIAMRDLN (162 aa)).

The protein in the N-terminal section; belongs to the UvrB family. In the C-terminal section; belongs to the helicase family. RecG subfamily.

The protein localises to the cytoplasm. Couples transcription and DNA repair by recognizing RNA polymerase (RNAP) stalled at DNA lesions. Mediates ATP-dependent release of RNAP and its truncated transcript from the DNA, and recruitment of nucleotide excision repair machinery to the damaged site. The chain is Transcription-repair-coupling factor from Staphylococcus haemolyticus (strain JCSC1435).